Here is a 440-residue protein sequence, read N- to C-terminus: 26S proteasome regulatory subunit 4 (440 aa).

The span at 1 to 13 (MGQSQSGGHGPGG) shows a compositional bias: gly residues. The segment at 1–49 (MGQSQSGGHGPGGGKKDDKDKKKKYEPPVPTRVGKKKKKTKGPDAASKL) is disordered. Glycine 2 is lipidated: N-myristoyl glycine. Serine 4 bears the Phosphoserine mark. Positions 14-26 (GKKDDKDKKKKYE) are enriched in basic and acidic residues. A Phosphothreonine modification is found at threonine 53. The tract at residues 84 to 104 (QMKPLEEKQEEERSKVDDLRG) is disordered. Over residues 86-103 (KPLEEKQEEERSKVDDLR) the composition is skewed to basic and acidic residues. Residue 226 to 233 (GPPGTGKT) coordinates ATP. Lysine 237 is covalently cross-linked (Glycyl lysine isopeptide (Lys-Gly) (interchain with G-Cter in ubiquitin)). An N6-acetyllysine modification is found at lysine 258. Threonine 434 bears the Phosphothreonine mark. The residue at position 439 (tyrosine 439) is a Phosphotyrosine.

Belongs to the AAA ATPase family. In terms of assembly, component of the 19S proteasome regulatory particle complex. The 26S proteasome consists of a 20S core particle (CP) and two 19S regulatory subunits (RP). The regulatory particle is made of a lid composed of 9 subunits, a base containing 6 ATPases including PSMC1 and few additional components. Interacts with SCA7. Interacts with NGLY1. Interacts with PAAF1.

It localises to the cytoplasm. It is found in the nucleus. The protein localises to the membrane. Its function is as follows. Component of the 26S proteasome, a multiprotein complex involved in the ATP-dependent degradation of ubiquitinated proteins. This complex plays a key role in the maintenance of protein homeostasis by removing misfolded or damaged proteins, which could impair cellular functions, and by removing proteins whose functions are no longer required. Therefore, the proteasome participates in numerous cellular processes, including cell cycle progression, apoptosis, or DNA damage repair. PSMC1 belongs to the heterohexameric ring of AAA (ATPases associated with diverse cellular activities) proteins that unfolds ubiquitinated target proteins that are concurrently translocated into a proteolytic chamber and degraded into peptides. This is 26S proteasome regulatory subunit 4 (PSMC1) from Homo sapiens (Human).